We begin with the raw amino-acid sequence, 160 residues long: Small ribosomal subunit protein uS7 (160 aa).

The protein belongs to the universal ribosomal protein uS7 family. As to quaternary structure, part of the 30S ribosomal subunit. Contacts proteins S9 and S11.

Functionally, one of the primary rRNA binding proteins, it binds directly to 16S rRNA where it nucleates assembly of the head domain of the 30S subunit. Is located at the subunit interface close to the decoding center, probably blocks exit of the E-site tRNA. The sequence is that of Small ribosomal subunit protein uS7 from Rickettsia massiliae (strain Mtu5).